Consider the following 488-residue polypeptide: Bifunctional protein GlmU (488 aa).

Residues 1-237 (MPRTRTPLAA…AEEASGVNDR (237 aa)) form a pyrophosphorylase region. UDP-N-acetyl-alpha-D-glucosamine contacts are provided by residues 13-16 (LAAG), Lys-27, Gln-82, 87-88 (GT), 110-112 (SGD), Gly-149, Glu-164, Asn-179, and Asn-235. Mg(2+) is bound at residue Asp-112. Mg(2+) is bound at residue Asn-235. A linker region spans residues 238 to 258 (VELSRANRVMVGRLAEAFMRA). The interval 259–488 (GVTIEDPARF…KGRPAARRAS (230 aa)) is N-acetyltransferase. Arg-341 and Lys-359 together coordinate UDP-N-acetyl-alpha-D-glucosamine. His-371 (proton acceptor) is an active-site residue. UDP-N-acetyl-alpha-D-glucosamine contacts are provided by Tyr-374 and Asn-385. Acetyl-CoA is bound by residues Ala-388, 394-395 (NY), Ser-413, Ala-431, and Arg-448. Residues 459–488 (AQRQAEKQMKGTATGPASARKGRPAARRAS) form a disordered region. Residues 478 to 488 (RKGRPAARRAS) show a composition bias toward basic residues.

It in the N-terminal section; belongs to the N-acetylglucosamine-1-phosphate uridyltransferase family. The protein in the C-terminal section; belongs to the transferase hexapeptide repeat family. Homotrimer. Requires Mg(2+) as cofactor.

The protein resides in the cytoplasm. It catalyses the reaction alpha-D-glucosamine 1-phosphate + acetyl-CoA = N-acetyl-alpha-D-glucosamine 1-phosphate + CoA + H(+). It carries out the reaction N-acetyl-alpha-D-glucosamine 1-phosphate + UTP + H(+) = UDP-N-acetyl-alpha-D-glucosamine + diphosphate. Its pathway is nucleotide-sugar biosynthesis; UDP-N-acetyl-alpha-D-glucosamine biosynthesis; N-acetyl-alpha-D-glucosamine 1-phosphate from alpha-D-glucosamine 6-phosphate (route II): step 2/2. It participates in nucleotide-sugar biosynthesis; UDP-N-acetyl-alpha-D-glucosamine biosynthesis; UDP-N-acetyl-alpha-D-glucosamine from N-acetyl-alpha-D-glucosamine 1-phosphate: step 1/1. The protein operates within bacterial outer membrane biogenesis; LPS lipid A biosynthesis. Catalyzes the last two sequential reactions in the de novo biosynthetic pathway for UDP-N-acetylglucosamine (UDP-GlcNAc). The C-terminal domain catalyzes the transfer of acetyl group from acetyl coenzyme A to glucosamine-1-phosphate (GlcN-1-P) to produce N-acetylglucosamine-1-phosphate (GlcNAc-1-P), which is converted into UDP-GlcNAc by the transfer of uridine 5-monophosphate (from uridine 5-triphosphate), a reaction catalyzed by the N-terminal domain. The chain is Bifunctional protein GlmU from Anaeromyxobacter dehalogenans (strain 2CP-1 / ATCC BAA-258).